Reading from the N-terminus, the 112-residue chain is MNTVSVVQFLAVGCAVFVLYGRGVFAAEGVKKAGQHKDAELCLGSDGLGHRLDEFWYNDDMCQRFLCFKDDEGIMYEQIANCPIAIAEGDCTLKPGRRATTQTVRPAVESPP.

Positions Met-1–Ala-26 are cleaved as a signal peptide.

The protein belongs to the scoloptoxin-16 family. Contains 2 disulfide bonds. In terms of tissue distribution, expressed by the venom gland.

The protein resides in the secreted. This is U-scoloptoxin(16)-Er5a from Ethmostigmus rubripes (Giant centipede).